We begin with the raw amino-acid sequence, 1134 residues long: ATP-dependent helicase/deoxyribonuclease subunit B (1134 aa).

8-15 (GRAGSGKS) contacts ATP. [4Fe-4S] cluster contacts are provided by Cys771, Cys1089, Cys1092, and Cys1098.

It belongs to the helicase family. AddB/RexB type 1 subfamily. In terms of assembly, heterodimer of AddA and AddB. It depends on Mg(2+) as a cofactor. The cofactor is [4Fe-4S] cluster.

Functionally, the heterodimer acts as both an ATP-dependent DNA helicase and an ATP-dependent, dual-direction single-stranded exonuclease. Recognizes the chi site generating a DNA molecule suitable for the initiation of homologous recombination. The AddB subunit has 5' -&gt; 3' nuclease activity but not helicase activity. The chain is ATP-dependent helicase/deoxyribonuclease subunit B from Clostridium novyi (strain NT).